A 92-amino-acid chain; its full sequence is CRISPR-associated endoribonuclease Cas2 (92 aa).

Aspartate 9 serves as a coordination point for Mg(2+).

The protein belongs to the CRISPR-associated endoribonuclease Cas2 protein family. In terms of assembly, homodimer, forms a heterotetramer with a Cas1 homodimer. It depends on Mg(2+) as a cofactor.

Its function is as follows. CRISPR (clustered regularly interspaced short palindromic repeat), is an adaptive immune system that provides protection against mobile genetic elements (viruses, transposable elements and conjugative plasmids). CRISPR clusters contain sequences complementary to antecedent mobile elements and target invading nucleic acids. CRISPR clusters are transcribed and processed into CRISPR RNA (crRNA). Functions as a ssRNA-specific endoribonuclease. Involved in the integration of spacer DNA into the CRISPR cassette. In Aeropyrum pernix (strain ATCC 700893 / DSM 11879 / JCM 9820 / NBRC 100138 / K1), this protein is CRISPR-associated endoribonuclease Cas2.